The following is a 188-amino-acid chain: Cytochrome b-245 chaperone 1 homolog (188 aa).

The chain crosses the membrane as a helical span at residues Ser20 to Thr42.

The protein belongs to the CYBC1 family.

It is found in the endoplasmic reticulum membrane. Its function is as follows. Functions as a chaperone necessary for a stable expression of the CYBA and CYBB subunits of the cytochrome b-245 heterodimer. The sequence is that of Cytochrome b-245 chaperone 1 homolog (cybc1) from Xenopus laevis (African clawed frog).